The sequence spans 476 residues: DnaJ homolog subfamily C member 7 homolog (476 aa).

The disordered stretch occupies residues 1 to 22; the sequence is MTEVETTHMNAGTESQQEPAEL. Residues 7-18 show a composition bias toward polar residues; the sequence is THMNAGTESQQE. 7 TPR repeats span residues 23–56, 59–92, 143–176, 177–210, 223–256, 261–294, and 295–328; these read AEKQ…GSDS, AIYY…KPDV, MSWM…NPKN, VEAL…DPDC, LENT…DPDN, AKLY…DSSY, and LKGL…DASD. The J domain occupies 349-414; sequence DHYKILGVSK…ESRRRFDSGV (66 aa).

It is found in the cytoplasm. The sequence is that of DnaJ homolog subfamily C member 7 homolog from Schizosaccharomyces pombe (strain 972 / ATCC 24843) (Fission yeast).